We begin with the raw amino-acid sequence, 641 residues long: Chaperone protein DnaK (641 aa).

T199 is subject to Phosphothreonine; by autocatalysis. The segment at 603-627 (YGQQQAEGGAQAAGAAGGSSKADDA) is disordered. The span at 604–616 (GQQQAEGGAQAAG) shows a compositional bias: low complexity.

It belongs to the heat shock protein 70 family.

In terms of biological role, acts as a chaperone. The chain is Chaperone protein DnaK from Azoarcus sp. (strain BH72).